Reading from the N-terminus, the 417-residue chain is MAEIRNYTINFGPQHPSAHGVLRLVLELDGEVVVRADPHIGLLHRGTEKLAETRTWVQSVPYMDRLDYVSMMCNEHAYCLAIERLLGLEVPIRAQYIRVMFDEITRILNHLLGIGTHALDIGAMTMVLYTFREREDLMDAYEAVSGARMHAAYYRPGGVYRDLPDRMPQYVVNKFKNANTVRELNENRQGSLLDFLEDFTERFNGYCDDYETLLTDNRIWKQRTVGIGVVTPEQAKAWGFTGPMLRGSGVAWDLRKKQPYEVYDRMDFDIPVGKNGDCYDRYLCRMEEMRQSNRIVKQCIDWLRKNPGPVIADNYKVAPPPRERMKGNMEELIHHFKLFTEGMHVPSGEVYAAIEHPKGEFGVYAVSDGANKPYRLKLRAPGFAHLAAMDEIARGHMIADVVAIIGTMDVVFGEIDR.

The protein belongs to the complex I 49 kDa subunit family. As to quaternary structure, NDH-1 is composed of 14 different subunits. Subunits NuoB, C, D, E, F, and G constitute the peripheral sector of the complex.

Its subcellular location is the cell inner membrane. The enzyme catalyses a quinone + NADH + 5 H(+)(in) = a quinol + NAD(+) + 4 H(+)(out). In terms of biological role, NDH-1 shuttles electrons from NADH, via FMN and iron-sulfur (Fe-S) centers, to quinones in the respiratory chain. The immediate electron acceptor for the enzyme in this species is believed to be ubiquinone. Couples the redox reaction to proton translocation (for every two electrons transferred, four hydrogen ions are translocated across the cytoplasmic membrane), and thus conserves the redox energy in a proton gradient. This Aromatoleum aromaticum (strain DSM 19018 / LMG 30748 / EbN1) (Azoarcus sp. (strain EbN1)) protein is NADH-quinone oxidoreductase subunit D.